A 135-amino-acid chain; its full sequence is Small ribosomal subunit protein bS6 (135 aa).

The segment at 99 to 135 (EKSAMLSHLDRNAHAGQDEERSRSPRRQRENAIERVE) is disordered.

This sequence belongs to the bacterial ribosomal protein bS6 family.

In terms of biological role, binds together with bS18 to 16S ribosomal RNA. This chain is Small ribosomal subunit protein bS6, found in Bartonella tribocorum (strain CIP 105476 / IBS 506).